Consider the following 512-residue polypeptide: Probable metalloreductase AIM14 (512 aa).

Transmembrane regions (helical) follow at residues 20-40 (IKYGYIVLGFSVVHIIGILIC), 61-81 (PLFISIIAWTLILIGLGVFHV), 97-117 (MSYALLPFDIFLVLRPNSIGL), 132-152 (VIIAGAIIHGVGYFIKWILEG), 161-181 (LWNFLGIVVFMLNLILIIISL), 191-211 (YFYVVHNITVWLFVGLICLHA), and 218-235 (YAIACASLLGLQIFERYA). One can recognise a Ferric oxidoreductase domain in the interval 94–206 (FGRMSYALLP…NITVWLFVGL (113 aa)). The FAD-binding FR-type domain maps to 230-355 (IFERYAKSHS…GGSGISFALP (126 aa)). Low complexity predominate over residues 427–436 (ESLPSSETPS). Positions 427–451 (ESLPSSETPSRTVNDDSLSQDTRPK) are disordered. The span at 437–447 (RTVNDDSLSQD) shows a compositional bias: polar residues.

Belongs to the ferric reductase (FRE) family. AIM14 subfamily.

Its subcellular location is the membrane. Functionally, probable cell surface metalloreductase. May be involved in iron or copper homeostasis. The polypeptide is Probable metalloreductase AIM14 (AIM14) (Debaryomyces hansenii (strain ATCC 36239 / CBS 767 / BCRC 21394 / JCM 1990 / NBRC 0083 / IGC 2968) (Yeast)).